A 61-amino-acid polypeptide reads, in one-letter code: Metallothionein-1B (61 aa).

Residues 1–29 (MDPNCSCVAGESCTCAGSCKCKQCRCASC) are beta. A divalent metal cation contacts are provided by Cys-5, Cys-7, Cys-13, Cys-15, Cys-19, Cys-21, Cys-24, Cys-26, Cys-29, Cys-33, Cys-34, Cys-36, Cys-37, Cys-41, Cys-44, Cys-48, Cys-50, Cys-57, Cys-59, and Cys-60. The segment at 30-61 (KKSCCSCCPVGCAKCAQGCVCKGASDKCSCCA) is alpha.

Belongs to the metallothionein superfamily. Type 1 family.

In terms of biological role, metallothioneins have a high content of cysteine residues that bind various heavy metals; these proteins are transcriptionally regulated by both heavy metals and glucocorticoids. This chain is Metallothionein-1B, found in Equus caballus (Horse).